Here is a 459-residue protein sequence, read N- to C-terminus: Putrescine aminotransferase (459 aa).

Pyridoxal 5'-phosphate contacts are provided by residues 150 to 151 (GT) and Gln274. Position 300 is an N6-(pyridoxal phosphate)lysine (Lys300). Thr332 contacts pyridoxal 5'-phosphate.

This sequence belongs to the class-III pyridoxal-phosphate-dependent aminotransferase family. Putrescine aminotransferase subfamily. Pyridoxal 5'-phosphate serves as cofactor.

The catalysed reaction is an alkane-alpha,omega-diamine + 2-oxoglutarate = an omega-aminoaldehyde + L-glutamate. It catalyses the reaction putrescine + 2-oxoglutarate = 1-pyrroline + L-glutamate + H2O. It carries out the reaction cadaverine + 2-oxoglutarate = 5-aminopentanal + L-glutamate. The protein operates within amine and polyamine degradation; putrescine degradation; 4-aminobutanal from putrescine (transaminase route): step 1/1. Catalyzes the aminotransferase reaction from putrescine to 2-oxoglutarate, leading to glutamate and 4-aminobutanal, which spontaneously cyclizes to form 1-pyrroline. This is the first step in one of two pathways for putrescine degradation, where putrescine is converted into 4-aminobutanoate (gamma-aminobutyrate or GABA) via 4-aminobutanal. Also functions as a cadaverine transaminase in a a L-lysine degradation pathway to succinate that proceeds via cadaverine, glutarate and L-2-hydroxyglutarate. This is Putrescine aminotransferase from Salmonella dublin (strain CT_02021853).